The chain runs to 1118 residues: Cytospin-A (1118 aa).

Disordered stretches follow at residues 1-157 (MKKS…DGQI) and 198-221 (GGKE…PHVS). Composition is skewed to polar residues over residues 57 to 102 (NPTS…TKET) and 112 to 123 (SRASANKKQSAA). A compositionally biased stretch (basic and acidic residues) spans 144 to 153 (SESRMSKSKS). Residues 204–215 (EGPEEEEEEEEE) show a composition bias toward acidic residues. Residues 225–264 (AADVESTLILLQEQNQAIREELNLLKSENRMLKDRLNALG) adopt a coiled-coil conformation. The tract at residues 289–379 (AGSGQSDGGG…RRGSSGNASE (91 aa)) is disordered. The segment covering 343-363 (SSDDALDAPSGASSSSESECA) has biased composition (low complexity). 2 coiled-coil regions span residues 384–438 (CLTE…MDSL) and 475–796 (GRYM…RGRV). 3 disordered regions span residues 771-790 (QEKN…RKQD), 837-876 (FDSA…PPAA), and 920-1001 (SAAS…ERKD). Polar residues predominate over residues 838–855 (DSASQGPPSNGASVTPTV). Positions 861–872 (PRTPLSPSPMKT) are enriched in pro residues. The span at 930–945 (QRVSNMDSTKTISVSR) shows a compositional bias: polar residues. The span at 946 to 956 (RSSEEMKRDMS) shows a compositional bias: basic and acidic residues. Low complexity predominate over residues 961-986 (ASSTSLMAMSAASAPLSLSSSSPTAS). Residues 1012–1117 (GSKRNALLKW…YVTAIYKYFE (106 aa)) form the Calponin-homology (CH) domain.

The protein belongs to the cytospin-A family. As to quaternary structure, may interact with both microtubules and actin cytoskeleton.

Its subcellular location is the cytoplasm. It is found in the cytoskeleton. It localises to the spindle. The protein resides in the cell junction. The protein localises to the gap junction. In terms of biological role, involved in cytokinesis and spindle organization. May play a role in actin cytoskeleton organization and microtubule stabilization and hence required for proper cell adhesion and migration. This Takifugu rubripes (Japanese pufferfish) protein is Cytospin-A (specc1l).